The sequence spans 380 residues: 3-isopropylmalate dehydratase large subunit (380 aa).

The [4Fe-4S] cluster site is built by C262, C320, and C323.

Belongs to the aconitase/IPM isomerase family. LeuC type 2 subfamily. In terms of assembly, heterodimer of LeuC and LeuD. Requires [4Fe-4S] cluster as cofactor.

It carries out the reaction (2R,3S)-3-isopropylmalate = (2S)-2-isopropylmalate. It participates in amino-acid biosynthesis; L-leucine biosynthesis; L-leucine from 3-methyl-2-oxobutanoate: step 2/4. Its function is as follows. Catalyzes the isomerization between 2-isopropylmalate and 3-isopropylmalate, via the formation of 2-isopropylmaleate. In Thermococcus kodakarensis (strain ATCC BAA-918 / JCM 12380 / KOD1) (Pyrococcus kodakaraensis (strain KOD1)), this protein is 3-isopropylmalate dehydratase large subunit.